Reading from the N-terminus, the 430-residue chain is UDP-N-acetylglucosamine 1-carboxyvinyltransferase 1 (430 aa).

22-23 (KN) lines the phosphoenolpyruvate pocket. A UDP-N-acetyl-alpha-D-glucosamine-binding site is contributed by arginine 102. Cysteine 126 (proton donor) is an active-site residue. 2-(S-cysteinyl)pyruvic acid O-phosphothioketal is present on cysteine 126. UDP-N-acetyl-alpha-D-glucosamine contacts are provided by residues 131–135 (RPVDL), 172–175 (KVSV), aspartate 317, and isoleucine 339.

This sequence belongs to the EPSP synthase family. MurA subfamily.

Its subcellular location is the cytoplasm. It catalyses the reaction phosphoenolpyruvate + UDP-N-acetyl-alpha-D-glucosamine = UDP-N-acetyl-3-O-(1-carboxyvinyl)-alpha-D-glucosamine + phosphate. It functions in the pathway cell wall biogenesis; peptidoglycan biosynthesis. Its function is as follows. Cell wall formation. Adds enolpyruvyl to UDP-N-acetylglucosamine. In Mesorhizobium japonicum (strain LMG 29417 / CECT 9101 / MAFF 303099) (Mesorhizobium loti (strain MAFF 303099)), this protein is UDP-N-acetylglucosamine 1-carboxyvinyltransferase 1.